We begin with the raw amino-acid sequence, 239 residues long: MAHAGRTGYDNREIVMKYIHYKLSQRGYEWDAGDVGAAPPGAAPAPGIFSSQPGHTPHPAASRDPVARTSPLQTPAAPGAAAGPALSPVPPVVHLTLRQAGDDFSRRYRRDFAEMSSQLHLTPFTARGRFATVVEELFRDGVNWGRIVAFFEFGGVMCVESVNREMSPLVDNIALWMTEYLNRHLHTWIQDNGGWDAFVELYGPSMRPLFDFSWLSLKTLLSLALVGACITLGAYLGHK.

The short motif at 10 to 30 is the BH4 element; sequence DNREIVMKYIHYKLSQRGYEW. Residues 39–85 form a disordered region; sequence PPGAAPAPGIFSSQPGHTPHPAASRDPVARTSPLQTPAAPGAAAGPA. The residue at position 69 (Thr-69) is a Phosphothreonine; by MAPK8. Ser-70 is subject to Phosphoserine; by MAPK8 and PKC. Residues 75–85 show a composition bias toward low complexity; it reads PAAPGAAAGPA. Position 87 is a phosphoserine; by MAPK8 (Ser-87). Residues 92-107 form a required for interaction with SEPTIN4 isoform ARTS. Required XIAP-mediated ubiquitination and apoptosis region; sequence VVHLTLRQAGDDFSRR. A BH3 motif is present at residues 93–107; that stretch reads VHLTLRQAGDDFSRR. The short motif at 136-155 is the BH1 element; it reads ELFRDGVNWGRIVAFFEFGG. Residues 187 to 202 carry the BH2 motif; sequence TWIQDNGGWDAFVELY. A helical membrane pass occupies residues 212 to 233; it reads FSWLSLKTLLSLALVGACITLG.

The protein belongs to the Bcl-2 family. As to quaternary structure, forms homodimers, and heterodimers with BAX, BAD, BAK and Bcl-X(L). Heterodimerization with BAX requires intact BH1 and BH2 motifs, and is necessary for anti-apoptotic activity. Part of a complex composed of SEPTIN4 isoform ARTS, XIAP and BCL2, within the complex interacts (via BH3 domain) with SEPTIN4 isoform ARTS and XIAP, SEPTIN4 isoform ARTS acts as a scaffold protein and stabilizes the complex. Component of the complex, at least composed of LRPPRC, BECN1 and BCL2; the interactions prevent BECN1 from forming an autophagy-inducing complex with PIK3C3. Interacts with EI24. Also interacts with APAF1, BBC3, BCL2L1, BNIPL, MRPL41 and TP53BP2. Binding to FKBP8 seems to target BCL2 to the mitochondria and probably interferes with the binding of BCL2 to its targets. Interacts with BAG1 in an ATP-dependent manner. Interacts with RAF1 (the 'Ser-338' and 'Ser-339' phosphorylated form). Interacts (via the BH4 domain) with EGLN3; the interaction prevents the formation of the BAX-BCL2 complex and inhibits the anti-apoptotic activity of BCL2. Interacts with G0S2; this interaction also prevents the formation of the anti-apoptotic BAX-BCL2 complex. Interacts with RTL10/BOP. Interacts with the SCF(FBXO10) complex. Interacts (via the loop between motifs BH4 and BH3) with NLRP1 (via LRR repeats), but not with NLRP2, NLRP3, NLRP4, PYCARD, nor MEFV. Interacts with GIMAP3/IAN4, GIMAP4/IAN1 and GIMAP5/IAN5. Interacts with BCAP31. Interacts with IRF3; the interaction is inhibited by Sendai virus infection. Interacts with BECN1; thereby inhibiting autophagy in non-starvation conditions. Interacts with AMBRA1; thereby inhibiting autophagy. (Microbial infection) Interacts with Toxoplasma gondii ROP17; the interaction probably promotes BCL2 phosphorylation and degradation. Post-translationally, phosphorylation/dephosphorylation on Ser-70 regulates anti-apoptotic activity. Growth factor-stimulated phosphorylation on Ser-70 by PKC is required for the anti-apoptosis activity and occurs during the G2/M phase of the cell cycle. In the absence of growth factors, BCL2 appears to be phosphorylated by other protein kinases such as ERKs and stress-activated kinases. Phosphorylated by MAPK8/JNK1 at Thr-69, Ser-70 and Ser-87, which stimulates starvation-induced autophagy. Dephosphorylated by protein phosphatase 2A (PP2A). Proteolytically cleaved by caspases during apoptosis. The cleaved protein, lacking the BH4 motif, has pro-apoptotic activity, causes the release of cytochrome c into the cytosol promoting further caspase activity. In terms of processing, monoubiquitinated by PRKN, leading to an increase in its stability. Ubiquitinated by SCF(FBXO10), leading to its degradation by the proteasome. Ubiquitinated by XIAP, leading to its degradation by the proteasome. In terms of tissue distribution, expressed in a variety of tissues.

Its subcellular location is the mitochondrion outer membrane. The protein resides in the nucleus membrane. The protein localises to the endoplasmic reticulum membrane. It localises to the cytoplasm. Its function is as follows. Suppresses apoptosis in a variety of cell systems including factor-dependent lymphohematopoietic and neural cells. Regulates cell death by controlling the mitochondrial membrane permeability. Appears to function in a feedback loop system with caspases. Inhibits caspase activity either by preventing the release of cytochrome c from the mitochondria and/or by binding to the apoptosis-activating factor (APAF-1). Also acts as an inhibitor of autophagy: interacts with BECN1 and AMBRA1 during non-starvation conditions and inhibits their autophagy function. May attenuate inflammation by impairing NLRP1-inflammasome activation, hence CASP1 activation and IL1B release. The protein is Apoptosis regulator Bcl-2 (BCL2) of Homo sapiens (Human).